A 264-amino-acid polypeptide reads, in one-letter code: Thiazole synthase (264 aa).

Residue Lys100 is the Schiff-base intermediate with DXP of the active site. 1-deoxy-D-xylulose 5-phosphate-binding positions include Gly161, 187–188, and 209–210; these read AG and NT.

It belongs to the ThiG family. In terms of assembly, homotetramer. Forms heterodimers with either ThiH or ThiS.

It localises to the cytoplasm. It carries out the reaction [ThiS sulfur-carrier protein]-C-terminal-Gly-aminoethanethioate + 2-iminoacetate + 1-deoxy-D-xylulose 5-phosphate = [ThiS sulfur-carrier protein]-C-terminal Gly-Gly + 2-[(2R,5Z)-2-carboxy-4-methylthiazol-5(2H)-ylidene]ethyl phosphate + 2 H2O + H(+). The protein operates within cofactor biosynthesis; thiamine diphosphate biosynthesis. In terms of biological role, catalyzes the rearrangement of 1-deoxy-D-xylulose 5-phosphate (DXP) to produce the thiazole phosphate moiety of thiamine. Sulfur is provided by the thiocarboxylate moiety of the carrier protein ThiS. In vitro, sulfur can be provided by H(2)S. This is Thiazole synthase from Nitrosospira multiformis (strain ATCC 25196 / NCIMB 11849 / C 71).